We begin with the raw amino-acid sequence, 1151 residues long: Protein BREAST CANCER SUSCEPTIBILITY 2 homolog A (1151 aa).

BRCA2 repeat units lie at residues 63–97 (MPGEIPMFRTGLGKSVVLKESSIAKAKSILAEKVT), 116–150 (TAETLPMFRTASGKSVPLKESSIAKAMSILGSDKI), 163–197 (FGVSNSLFQTASNKKVNVSSAGLARAKALLGLEED), and 257–291 (LKVPPTKFQTAGGKSLSVSAEALKRARNLLGDPEL). The tract at residues 408–427 (GFIPRGRQPGRPADQPLVDI) is disordered.

As to quaternary structure, interacts with RAD51 and DMC1. Interacts with DSS1(I). In terms of tissue distribution, expressed in flower buds.

In terms of biological role, involved in double-strand break repair and/or homologous recombination by mediating RAD51- and DMC1-facilitated DNA repair. Plays an essential role in both somatic and meiotic homologous recombination. Is crucial for the formation of RAD51 and DMC1 foci during male meiotic homologous recombination in prophase I. The protein is Protein BREAST CANCER SUSCEPTIBILITY 2 homolog A of Arabidopsis thaliana (Mouse-ear cress).